Reading from the N-terminus, the 238-residue chain is ATP synthase subunit a (238 aa).

Helical transmembrane passes span 18-38 (LTIL…VFWA), 75-95 (YSLL…LGLM), 112-132 (NFGV…IEGI), 179-199 (VVTG…PLAF), and 203-223 (IVWT…FIIL).

The protein belongs to the ATPase A chain family. In terms of assembly, F-type ATPases have 2 components, CF(1) - the catalytic core - and CF(0) - the membrane proton channel. CF(1) has five subunits: alpha(3), beta(3), gamma(1), delta(1), epsilon(1). CF(0) has three main subunits: a(1), b(2) and c(9-12). The alpha and beta chains form an alternating ring which encloses part of the gamma chain. CF(1) is attached to CF(0) by a central stalk formed by the gamma and epsilon chains, while a peripheral stalk is formed by the delta and b chains.

Its subcellular location is the cell membrane. Key component of the proton channel; it plays a direct role in the translocation of protons across the membrane. The protein is ATP synthase subunit a of Streptococcus agalactiae serotype III (strain NEM316).